A 412-amino-acid polypeptide reads, in one-letter code: LL-diaminopimelate aminotransferase (412 aa).

Substrate-binding residues include Tyr-15 and Gly-42. Pyridoxal 5'-phosphate is bound by residues Tyr-72, 108–109 (SK), Tyr-132, Asn-187, Tyr-218, and 246–248 (SFS). Substrate is bound by residues Lys-109, Tyr-132, and Asn-187. The residue at position 249 (Lys-249) is an N6-(pyridoxal phosphate)lysine. Pyridoxal 5'-phosphate-binding residues include Arg-257 and Asn-292. Residues Asn-292 and Arg-388 each contribute to the substrate site.

This sequence belongs to the class-I pyridoxal-phosphate-dependent aminotransferase family. LL-diaminopimelate aminotransferase subfamily. Homodimer. Requires pyridoxal 5'-phosphate as cofactor.

The catalysed reaction is (2S,6S)-2,6-diaminopimelate + 2-oxoglutarate = (S)-2,3,4,5-tetrahydrodipicolinate + L-glutamate + H2O + H(+). The protein operates within amino-acid biosynthesis; L-lysine biosynthesis via DAP pathway; LL-2,6-diaminopimelate from (S)-tetrahydrodipicolinate (aminotransferase route): step 1/1. Functionally, involved in the synthesis of meso-diaminopimelate (m-DAP or DL-DAP), required for both lysine and peptidoglycan biosynthesis. Catalyzes the direct conversion of tetrahydrodipicolinate to LL-diaminopimelate. This is LL-diaminopimelate aminotransferase from Synechocystis sp. (strain ATCC 27184 / PCC 6803 / Kazusa).